The sequence spans 298 residues: N-acetylmuramic acid 6-phosphate etherase (298 aa).

In terms of domain architecture, SIS spans 55-218 (IHAQVSGGGR…STGLMIKSGK (164 aa)). The active-site Proton donor is glutamate 83. Glutamate 114 is an active-site residue.

Belongs to the GCKR-like family. MurNAc-6-P etherase subfamily. As to quaternary structure, homodimer.

The enzyme catalyses N-acetyl-D-muramate 6-phosphate + H2O = N-acetyl-D-glucosamine 6-phosphate + (R)-lactate. It participates in amino-sugar metabolism; N-acetylmuramate degradation. Its pathway is amino-sugar metabolism; 1,6-anhydro-N-acetylmuramate degradation. It functions in the pathway cell wall biogenesis; peptidoglycan recycling. Its function is as follows. Specifically catalyzes the cleavage of the D-lactyl ether substituent of MurNAc 6-phosphate, producing GlcNAc 6-phosphate and D-lactate. Together with AnmK, is also required for the utilization of anhydro-N-acetylmuramic acid (anhMurNAc) either imported from the medium or derived from its own cell wall murein, and thus plays a role in cell wall recycling. The protein is N-acetylmuramic acid 6-phosphate etherase of Escherichia coli (strain K12 / MC4100 / BW2952).